The chain runs to 81 residues: Sulfur carrier protein TusA (81 aa).

Catalysis depends on C19, which acts as the Cysteine persulfide intermediate.

Belongs to the sulfur carrier protein TusA family. In terms of assembly, interacts with IscS.

It localises to the cytoplasm. It participates in tRNA modification. Its function is as follows. Sulfur carrier protein involved in sulfur trafficking in the cell. Part of a sulfur-relay system required for 2-thiolation during synthesis of 2-thiouridine of the modified wobble base 5-methylaminomethyl-2-thiouridine (mnm(5)s(2)U) in tRNA. Interacts with IscS and stimulates its cysteine desulfurase activity. Accepts an activated sulfur from IscS, which is then transferred to TusD, and thus determines the direction of sulfur flow from IscS to 2-thiouridine formation. Also appears to be involved in sulfur transfer for the biosynthesis of molybdopterin. The sequence is that of Sulfur carrier protein TusA from Escherichia coli (strain SMS-3-5 / SECEC).